Consider the following 343-residue polypeptide: MKFSEIAQKLSPLVQSQSLTAYPDRNPQIKAITPIETALVDTISYIEGGKFASFVAKTDATALILPLDSNLQQQADERGIAWLASANPRLLFAHAIKLFYQPFQPQPYIHATAVVHPSAKIGHKVAIGAHAVVEANVTLGDGVCIHPNAVIYPGVHIGDRTILHANCTIHERVQIGNDCVIHSGAVIGAEGFGFVPVPEGWFKMEQSGIVVLEDGVEIGCNSTVDRPAVGETRIGSQTKIDNLVHIAHNCQIGQACALAGQVGMAGGVKLGNRVILAGQVGIANQAAIGDGAIATAQTGIHNDIGAGEVVSGSPAMPHKLFLKVAAAYKRLPEIYQAVKQLKK.

His248 serves as the catalytic Proton acceptor.

This sequence belongs to the transferase hexapeptide repeat family. LpxD subfamily. In terms of assembly, homotrimer.

It carries out the reaction a UDP-3-O-[(3R)-3-hydroxyacyl]-alpha-D-glucosamine + a (3R)-hydroxyacyl-[ACP] = a UDP-2-N,3-O-bis[(3R)-3-hydroxyacyl]-alpha-D-glucosamine + holo-[ACP] + H(+). The protein operates within bacterial outer membrane biogenesis; LPS lipid A biosynthesis. In terms of biological role, catalyzes the N-acylation of UDP-3-O-acylglucosamine using 3-hydroxyacyl-ACP as the acyl donor. Is involved in the biosynthesis of lipid A, a phosphorylated glycolipid that anchors the lipopolysaccharide to the outer membrane of the cell. This Microcystis aeruginosa (strain NIES-843 / IAM M-2473) protein is UDP-3-O-acylglucosamine N-acyltransferase.